The sequence spans 282 residues: Biotin synthase (282 aa).

The region spanning 1 to 228 (MQEIFLCSIS…NARLMVAGGR (228 aa)) is the Radical SAM core domain. Residues C17, C21, and C24 each coordinate [4Fe-4S] cluster. Positions 61, 96, 154, and 221 each coordinate [2Fe-2S] cluster.

This sequence belongs to the radical SAM superfamily. Biotin synthase family. In terms of assembly, homodimer. [4Fe-4S] cluster serves as cofactor. [2Fe-2S] cluster is required as a cofactor.

The catalysed reaction is (4R,5S)-dethiobiotin + (sulfur carrier)-SH + 2 reduced [2Fe-2S]-[ferredoxin] + 2 S-adenosyl-L-methionine = (sulfur carrier)-H + biotin + 2 5'-deoxyadenosine + 2 L-methionine + 2 oxidized [2Fe-2S]-[ferredoxin]. The protein operates within cofactor biosynthesis; biotin biosynthesis; biotin from 7,8-diaminononanoate: step 2/2. Functionally, catalyzes the conversion of dethiobiotin (DTB) to biotin by the insertion of a sulfur atom into dethiobiotin via a radical-based mechanism. This Helicobacter pylori (strain Shi470) protein is Biotin synthase.